We begin with the raw amino-acid sequence, 203 residues long: uncharacterized protein (203 aa).

The interval 117 to 138 (SSDPKLKQPSNCLNDQTNNDSA) is disordered. Positions 124 to 138 (QPSNCLNDQTNNDSA) are enriched in polar residues.

The protein resides in the cytoplasm. It is found in the nucleus. This is an uncharacterized protein from Schizosaccharomyces pombe (strain 972 / ATCC 24843) (Fission yeast).